Here is a 101-residue protein sequence, read N- to C-terminus: Small ribosomal subunit protein uS14 (101 aa).

The protein belongs to the universal ribosomal protein uS14 family. Part of the 30S ribosomal subunit. Contacts proteins S3 and S10.

In terms of biological role, binds 16S rRNA, required for the assembly of 30S particles and may also be responsible for determining the conformation of the 16S rRNA at the A site. This is Small ribosomal subunit protein uS14 from Pseudomonas syringae pv. syringae (strain B728a).